Here is a 533-residue protein sequence, read N- to C-terminus: E3 ubiquitin-protein ligase MGRN1 (533 aa).

A lipid anchor (N-myristoyl glycine) is attached at Gly-2. An RING-type zinc finger spans residues 278–317 (ECVVCLSDLRDTLILPCRHLCLCTSCADTLRYQANNCPIC). The Required for TSG101-binding motif lies at 385–388 (PSAP). At Tyr-390 the chain carries Phosphotyrosine. The interval 421-519 (QKGKTQSKSP…QPVPPADIYL (99 aa)) is disordered. Polar residues predominate over residues 423–439 (GKTQSKSPDSTLRSPSS). Ser-429, Ser-450, and Ser-502 each carry phosphoserine. Residues 443-454 (EEDEEKLSEDPE) show a composition bias toward acidic residues.

Interacts with MC1R and MC4R. Interacts with TSG101. Interacts with mislocalized cytosolically exposed PRNP; this interaction alters MGRN1 subcellular location and causes lysosomal enlargement. Autoubiquitinated in vitro.

It is found in the cytoplasm. It localises to the cytosol. The protein localises to the cell membrane. Its subcellular location is the early endosome. It catalyses the reaction S-ubiquitinyl-[E2 ubiquitin-conjugating enzyme]-L-cysteine + [acceptor protein]-L-lysine = [E2 ubiquitin-conjugating enzyme]-L-cysteine + N(6)-ubiquitinyl-[acceptor protein]-L-lysine.. It functions in the pathway protein modification; protein ubiquitination. Its function is as follows. E3 ubiquitin-protein ligase. Mediates TSG101 monoubiquitination at multiple sites. Plays a role in the regulation of endosome-to-lysosome trafficking. Impairs MC1R- and MC4R-signaling by competing with GNAS-binding to MCRs and inhibiting agonist-induced cAMP production. Does not inhibit ADRB2-signaling. Does not promote MC1R ubiquitination. Also acts as a negative regulator of hedgehog signaling. The sequence is that of E3 ubiquitin-protein ligase MGRN1 (Mgrn1) from Rattus norvegicus (Rat).